Here is a 156-residue protein sequence, read N- to C-terminus: Ribosomal RNA large subunit methyltransferase H (156 aa).

S-adenosyl-L-methionine-binding positions include leucine 72, glycine 104, and 123–128; that span reads FGAMVW.

This sequence belongs to the RNA methyltransferase RlmH family. As to quaternary structure, homodimer.

It is found in the cytoplasm. The enzyme catalyses pseudouridine(1915) in 23S rRNA + S-adenosyl-L-methionine = N(3)-methylpseudouridine(1915) in 23S rRNA + S-adenosyl-L-homocysteine + H(+). Specifically methylates the pseudouridine at position 1915 (m3Psi1915) in 23S rRNA. This chain is Ribosomal RNA large subunit methyltransferase H, found in Ruegeria pomeroyi (strain ATCC 700808 / DSM 15171 / DSS-3) (Silicibacter pomeroyi).